Consider the following 541-residue polypeptide: Threonine--tRNA ligase catalytic subunit (541 aa).

The segment at 135 to 429 is catalytic; that stretch reads DHRIIGERMD…LLEHFRGKLP (295 aa). Cys-227, His-278, and His-406 together coordinate Zn(2+).

Belongs to the class-II aminoacyl-tRNA synthetase family. Homodimer. Probably interacts with its editing subunit. Zn(2+) is required as a cofactor.

It is found in the cytoplasm. It carries out the reaction tRNA(Thr) + L-threonine + ATP = L-threonyl-tRNA(Thr) + AMP + diphosphate + H(+). Its function is as follows. Catalyzes the attachment of threonine to tRNA(Thr) in a two-step reaction: L-threonine is first activated by ATP to form Thr-AMP and then transferred to the acceptor end of tRNA(Thr). Also activates L-serine and transfers it to tRNA(Thr) but cannot deacylate incorrectly charged amino acid; unlike most archaea the editing function is found in a freestanding protein. This Metallosphaera sedula (strain ATCC 51363 / DSM 5348 / JCM 9185 / NBRC 15509 / TH2) protein is Threonine--tRNA ligase catalytic subunit.